A 164-amino-acid chain; its full sequence is NADH-quinone oxidoreductase subunit I (164 aa).

4Fe-4S ferredoxin-type domains follow at residues 55 to 85 (LRRYPNGEERCIACKLCEAVCPAQAITIDAE) and 95 to 124 (TRYDIDMTKCIYCGFCQEACPVDAIVEGPN). 8 residues coordinate [4Fe-4S] cluster: C65, C68, C71, C75, C104, C107, C110, and C114.

Belongs to the complex I 23 kDa subunit family. As to quaternary structure, NDH-1 is composed of 14 different subunits. Subunits NuoA, H, J, K, L, M, N constitute the membrane sector of the complex. [4Fe-4S] cluster serves as cofactor.

Its subcellular location is the cell inner membrane. The catalysed reaction is a quinone + NADH + 5 H(+)(in) = a quinol + NAD(+) + 4 H(+)(out). Functionally, NDH-1 shuttles electrons from NADH, via FMN and iron-sulfur (Fe-S) centers, to quinones in the respiratory chain. The immediate electron acceptor for the enzyme in this species is believed to be ubiquinone. Couples the redox reaction to proton translocation (for every two electrons transferred, four hydrogen ions are translocated across the cytoplasmic membrane), and thus conserves the redox energy in a proton gradient. The polypeptide is NADH-quinone oxidoreductase subunit I (Ruegeria sp. (strain TM1040) (Silicibacter sp.)).